Here is a 275-residue protein sequence, read N- to C-terminus: 6-deoxy-6-sulfo-D-fructose transketolase subunit SqwG (275 aa).

This sequence belongs to the transketolase family. In terms of assembly, forms a complex with SqwH. It depends on thiamine diphosphate as a cofactor.

The enzyme catalyses 6-deoxy-6-sulfo-D-fructose + D-glyceraldehyde 3-phosphate = 4-deoxy-4-sulfo-D-erythrose + D-xylulose 5-phosphate. It catalyses the reaction 4-deoxy-4-sulfo-D-erythrulose + D-glyceraldehyde 3-phosphate = sulfoacetaldehyde + D-xylulose 5-phosphate. Part of the sulfo-TK pathway, a D-sulfoquinovose degradation pathway that produces 2-hydroxyethane-1-sulfonate (isethionate). Catalyzes two steps of the pathway: the formation of 4-deoxy-4-sulfoerythrose (SE) and xylulose 5-phosphate from 6-deoxy-6-sulfo-D-fructose (SF) and glyceraldehyde 3-phosphate, and the formation of sulfoacetaldehyde (SA) and xylulose 5-phosphate from 4-deoxy-4-sulfo-D-erythrulose (SEu) and glyceraldehyde 3-phosphate. In Clostridium sp. (strain MSTE9), this protein is 6-deoxy-6-sulfo-D-fructose transketolase subunit SqwG.